We begin with the raw amino-acid sequence, 204 residues long: Recombination protein RecR (204 aa).

The segment at 57–72 (CPTCFNYTDTDICRYC) adopts a C4-type zinc-finger fold. Residues 80–181 (ESICVVEEPS…KLSRIAHGVP (102 aa)) enclose the Toprim domain.

This sequence belongs to the RecR family.

In terms of biological role, may play a role in DNA repair. It seems to be involved in an RecBC-independent recombinational process of DNA repair. It may act with RecF and RecO. The protein is Recombination protein RecR of Bdellovibrio bacteriovorus (strain ATCC 15356 / DSM 50701 / NCIMB 9529 / HD100).